A 415-amino-acid polypeptide reads, in one-letter code: MGSLGAILKHPDDFYPLLKLKIAARHAEKQIPSEPHWAFCYSMLHKVSRSFGLVIQQLGPQLRDAVCIFYLVLRALDTVEDDTSISTEVKVPILMAFHRHIYDNDWHFSCGTKEYKVLMDEFHHVSNAFLDLGSGYKEAIEDITMRMGAGMAKFICKEVETIDDYDEYCHYVAGLVGLGLSKLFHASGAEDLATDSLSNSMGLFLQKTNIIRDYLEDINEIPKSRMFWPRQIWSKYVDKLEDLKYEENSGKAVQCLNDMVTNALLHVEDCLKYMSDLRDPAIFRFCAIPQIMSIGTLALCYNNIQVFRGVVKMRRGLTAKVIDRTNTMSDVYGAFFDFSCMLKSKVDNNDPNATKTLSRLEAIQKICKNSGALTTKRKSYIIENESGYNSTLIVILFIILAILYAYLSSNLPNSL.

Transmembrane regions (helical) follow at residues Ala281–Tyr301 and Leu392–Pro412.

It belongs to the phytoene/squalene synthase family. Mg(2+) serves as cofactor. Requires Mn(2+) as cofactor.

It is found in the endoplasmic reticulum membrane. It carries out the reaction 2 (2E,6E)-farnesyl diphosphate + NADH + H(+) = squalene + 2 diphosphate + NAD(+). The catalysed reaction is 2 (2E,6E)-farnesyl diphosphate + NADPH + H(+) = squalene + 2 diphosphate + NADP(+). It functions in the pathway terpene metabolism; lanosterol biosynthesis; lanosterol from farnesyl diphosphate: step 1/3. Functionally, component of the triterpene saponins (e.g. ginsenosides or panaxosides) and phytosterols biosynthetic pathways. Catalyzes the biosynthesis of squalene. The protein is Squalene synthase 2 of Panax ginseng (Korean ginseng).